A 313-amino-acid chain; its full sequence is Formimidoylglutamase (313 aa).

Mn(2+) is bound by residues His130, Asp155, His157, Asp159, Asp241, and Asp243.

The protein belongs to the arginase family. It depends on Mn(2+) as a cofactor.

The enzyme catalyses N-formimidoyl-L-glutamate + H2O = formamide + L-glutamate. Its pathway is amino-acid degradation; L-histidine degradation into L-glutamate; L-glutamate from N-formimidoyl-L-glutamate (hydrolase route): step 1/1. Its function is as follows. Catalyzes the conversion of N-formimidoyl-L-glutamate to L-glutamate and formamide. The polypeptide is Formimidoylglutamase (Salmonella choleraesuis (strain SC-B67)).